A 149-amino-acid chain; its full sequence is UPF0178 protein VFMJ11_0615 (149 aa).

It belongs to the UPF0178 family.

This chain is UPF0178 protein VFMJ11_0615, found in Aliivibrio fischeri (strain MJ11) (Vibrio fischeri).